The sequence spans 84 residues: Small ribosomal subunit protein uS17 (84 aa).

The protein belongs to the universal ribosomal protein uS17 family. Part of the 30S ribosomal subunit.

Its function is as follows. One of the primary rRNA binding proteins, it binds specifically to the 5'-end of 16S ribosomal RNA. The polypeptide is Small ribosomal subunit protein uS17 (Ureaplasma parvum serovar 3 (strain ATCC 27815 / 27 / NCTC 11736)).